A 227-amino-acid chain; its full sequence is Ribose-5-phosphate isomerase A (227 aa).

Substrate contacts are provided by residues 26-29 (TGST), 82-85 (DGAD), and 95-98 (KGGG). The active-site Proton acceptor is glutamate 104. Position 122 (lysine 122) interacts with substrate.

The protein belongs to the ribose 5-phosphate isomerase family. Homodimer.

It carries out the reaction aldehydo-D-ribose 5-phosphate = D-ribulose 5-phosphate. Its pathway is carbohydrate degradation; pentose phosphate pathway; D-ribose 5-phosphate from D-ribulose 5-phosphate (non-oxidative stage): step 1/1. Catalyzes the reversible conversion of ribose-5-phosphate to ribulose 5-phosphate. This Streptococcus equi subsp. zooepidemicus (strain H70) protein is Ribose-5-phosphate isomerase A.